Consider the following 251-residue polypeptide: Ubiquinone/menaquinone biosynthesis C-methyltransferase UbiE (251 aa).

Residues threonine 74, aspartate 95, 123 to 124 (NA), and serine 140 each bind S-adenosyl-L-methionine.

Belongs to the class I-like SAM-binding methyltransferase superfamily. MenG/UbiE family.

It catalyses the reaction a 2-demethylmenaquinol + S-adenosyl-L-methionine = a menaquinol + S-adenosyl-L-homocysteine + H(+). The enzyme catalyses a 2-methoxy-6-(all-trans-polyprenyl)benzene-1,4-diol + S-adenosyl-L-methionine = a 5-methoxy-2-methyl-3-(all-trans-polyprenyl)benzene-1,4-diol + S-adenosyl-L-homocysteine + H(+). It participates in quinol/quinone metabolism; menaquinone biosynthesis; menaquinol from 1,4-dihydroxy-2-naphthoate: step 2/2. It functions in the pathway cofactor biosynthesis; ubiquinone biosynthesis. Its function is as follows. Methyltransferase required for the conversion of demethylmenaquinol (DMKH2) to menaquinol (MKH2) and the conversion of 2-polyprenyl-6-methoxy-1,4-benzoquinol (DDMQH2) to 2-polyprenyl-3-methyl-6-methoxy-1,4-benzoquinol (DMQH2). The protein is Ubiquinone/menaquinone biosynthesis C-methyltransferase UbiE of Salmonella paratyphi A (strain AKU_12601).